We begin with the raw amino-acid sequence, 365 residues long: Galactoside alpha-(1,2)-fucosyltransferase 1 (365 aa).

At 1–8 (MWVPSRRH) the chain is on the cytoplasmic side. The helical; Signal-anchor for type II membrane protein transmembrane segment at 9–28 (LCLTFLLVCVLAAIFFLNVY) threads the bilayer. Residues 29–365 (QDLFYSGLDL…LSPLQMLAGP (337 aa)) are Lumenal-facing. N-linked (GlcNAc...) asparagine glycosylation is found at asparagine 65, asparagine 301, and asparagine 327.

The protein belongs to the glycosyltransferase 11 family.

The protein localises to the golgi apparatus. It localises to the golgi stack membrane. It carries out the reaction a beta-D-galactosyl-(1-&gt;4)-N-acetyl-beta-D-glucosaminyl derivative + GDP-beta-L-fucose = an alpha-L-Fuc-(1-&gt;2)-beta-D-Gal-(1-&gt;4)-beta-D-GlcNAc derivative + GDP + H(+). It catalyses the reaction a ganglioside GA1 + GDP-beta-L-fucose = a ganglioside Fuc-GA1 + GDP + H(+). The catalysed reaction is a beta-D-Gal-(1-&gt;3)-beta-D-GlcNAc-(1-&gt;3)-beta-D-Gal-(1-&gt;4)-beta-D-Glc-(1&lt;-&gt;1')-Cer(d18:1(4E)) + GDP-beta-L-fucose = alpha-L-fucosyl-(1-&gt;2)- beta-D-galactosyl-(1-&gt;3)-N-acetyl-beta-D-glucosaminyl-(1-&gt;3)-beta-D-galactosyl-(1-&gt;4)-beta-D-glucosyl-(1&lt;-&gt;1')-N-acylsphing-4-enine + GDP + H(+). The enzyme catalyses a neolactoside nLc4Cer(d18:1(4E)) + GDP-beta-L-fucose = a neolactoside IV(2)-alpha-Fuc-nLc4Cer(d18:1(4E)) + GDP + H(+). It carries out the reaction a ganglioside GM1 + GDP-beta-L-fucose = a ganglioside Fuc-GM1 + GDP + H(+). It catalyses the reaction beta-D-galactosyl-(1-&gt;3)-N-acetyl-D-galactosamine + GDP-beta-L-fucose = alpha-L-fucosyl-(1-&gt;2)-beta-D-galactosyl-(1-&gt;3)-N-acetyl-D-galactosamine + GDP + H(+). Its pathway is protein modification; protein glycosylation. Functionally, catalyzes the transfer of L-fucose, from a guanosine diphosphate-beta-L-fucose, to the terminal galactose residue of glycoconjugates through an alpha(1,2) linkage leading to H antigen synthesis that is an intermediate substrate in the synthesis of ABO blood group antigens. H antigen is essential for maturation of the glomerular layer of the main olfactory bulb, in cell migration and early cell-cell contacts during tumor associated angiogenesis. Preferentially fucosylates soluble lactose and to a lesser extent fucosylates glycolipids gangliosides GA1 and GM1a. The polypeptide is Galactoside alpha-(1,2)-fucosyltransferase 1 (Sus scrofa (Pig)).